A 497-amino-acid chain; its full sequence is MSDLFTTIETPVIKYEQPLGLFINNEFVKGVEGKTFQVINPSNEKVITSVHEATEKDVDVAVAAARAAFEGPWRQVTPSERGILINKLADLMERDIDTLAAIESLDNGKAFTMAKVDLANSIGCLRYYAGWADKIHGQTIDTNPETLTYTRHEPVGVCGQIIPWNFPLLMWSWKIGPAVAAGNTVVLKTAEQTPLSALYAAKLIKEAGFPAGVINVISGFGRTAGAAISSHMDIDKVAFTGSTLVGRTILQAAAKSNLKKVTLELGGKSPNIVFDDADIDNAISWANFGIFFNHGQCCCAGSRILVQEGIYDKFVARFKERAQKNKVGNPFEQDTFQGPQVSQLQFDRIMEYINHGKKAGATVATGGDRHGNEGYFIQPTVFTDVTSDMKIAQEEIFGPVVTIQKFKDEAEAIKIGNSTDYGLAAAVHTKNVNTAIRVSNALKAGTVWINNYNMISYQAPFGGFKQSGLGRELGSYALENYTQIKTVHYRLGDALFA.

Gly241–Gly246 is a binding site for NAD(+). Glu264 (proton acceptor) is an active-site residue. Catalysis depends on Cys298, which acts as the Nucleophile.

Belongs to the aldehyde dehydrogenase family.

It catalyses the reaction an aldehyde + NAD(+) + H2O = a carboxylate + NADH + 2 H(+). Its pathway is alcohol metabolism; ethanol degradation; acetate from ethanol: step 2/2. This Emericella nidulans (strain FGSC A4 / ATCC 38163 / CBS 112.46 / NRRL 194 / M139) (Aspergillus nidulans) protein is Aldehyde dehydrogenase (aldA).